Consider the following 306-residue polypeptide: Beta-lactamase 1 (306 aa).

The N-terminal stretch at 1–43 (MKNKKMLKIGMCVGILGLSITSLVTFTGGALQVEAKEKTGQVK) is a signal peptide. The Acyl-ester intermediate role is filled by S89. E185 functions as the Proton acceptor in the catalytic mechanism. 251 to 253 (KSG) is a binding site for substrate.

This sequence belongs to the class-A beta-lactamase family.

It localises to the secreted. The catalysed reaction is a beta-lactam + H2O = a substituted beta-amino acid. Its function is as follows. Acts preferentially on penicillins. The sequence is that of Beta-lactamase 1 (penPC) from Bacillus cereus.